Reading from the N-terminus, the 715-residue chain is 1,4-alpha-glucan branching enzyme GlgB (715 aa).

Asp-396 (nucleophile) is an active-site residue. Catalysis depends on Glu-449, which acts as the Proton donor.

This sequence belongs to the glycosyl hydrolase 13 family. GlgB subfamily. In terms of assembly, monomer.

It carries out the reaction Transfers a segment of a (1-&gt;4)-alpha-D-glucan chain to a primary hydroxy group in a similar glucan chain.. The protein operates within glycan biosynthesis; glycogen biosynthesis. Its function is as follows. Catalyzes the formation of the alpha-1,6-glucosidic linkages in glycogen by scission of a 1,4-alpha-linked oligosaccharide from growing alpha-1,4-glucan chains and the subsequent attachment of the oligosaccharide to the alpha-1,6 position. The protein is 1,4-alpha-glucan branching enzyme GlgB of Vibrio vulnificus (strain YJ016).